The primary structure comprises 296 residues: Glycine--tRNA ligase alpha subunit (296 aa).

Belongs to the class-II aminoacyl-tRNA synthetase family. Tetramer of two alpha and two beta subunits.

It localises to the cytoplasm. The enzyme catalyses tRNA(Gly) + glycine + ATP = glycyl-tRNA(Gly) + AMP + diphosphate. This Listeria innocua serovar 6a (strain ATCC BAA-680 / CLIP 11262) protein is Glycine--tRNA ligase alpha subunit.